Reading from the N-terminus, the 255-residue chain is DASH complex subunit SPC34 (255 aa).

The disordered stretch occupies residues 53–81; that stretch reads LFSVPPPPPRQTTLTAEQQQQQKPSNRRQ. Positions 63-81 are enriched in polar residues; that stretch reads QTTLTAEQQQQQKPSNRRQ. Positions 176–248 form a coiled coil; the sequence is LAYYEAKIAE…QARLRALDAD (73 aa).

The protein belongs to the DASH complex SPC34 family. Component of the DASH complex consisting of ASK1, DAD1, DAD2, DAD3, DAD4, DAM1, DUO1, HSK3, SPC19 and SPC34, with a stoichiometry of one copy of each subunit per complex. Multiple DASH complexes oligomerize to form a ring that encircles spindle microtubules and organizes the rod-like NDC80 complexes of the outer kinetochore of the outer kinetochore. DASH complex oligomerization strengthens microtubule attachments. On cytoplasmic microtubules, DASH complexes appear to form patches instead of rings.

It is found in the nucleus. Its subcellular location is the cytoplasm. The protein resides in the cytoskeleton. The protein localises to the spindle. It localises to the chromosome. It is found in the centromere. Its subcellular location is the kinetochore. In terms of biological role, component of the DASH complex that connects microtubules with kinetochores and couples microtubule depolymerisation to chromosome movement; it is involved in retrieving kinetochores to the spindle poles before their re-orientation on the spindle in early mitosis and allows microtubule depolymerization to pull chromosomes apart and resist detachment during anaphase. Kinetochores, consisting of a centromere-associated inner segment and a microtubule-contacting outer segment, play a crucial role in chromosome segregation by mediating the physical connection between centromeric DNA and microtubules. Kinetochores also serve as an input point for the spindle assembly checkpoint, which delays anaphase until all chromosomes have bioriented on the mitotic spindle. This is DASH complex subunit SPC34 from Chaetomium thermophilum (strain DSM 1495 / CBS 144.50 / IMI 039719) (Thermochaetoides thermophila).